The chain runs to 555 residues: (+)-delta-cadinene synthase isozyme A (555 aa).

The segment at 1-22 (MASQASQVLASPHPAISSENRP) is disordered. 4 residues coordinate Mg(2+): Asp308, Asp312, Asp452, and Glu456. The DDXXD motif motif lies at 308–312 (DDTYD).

The protein belongs to the terpene synthase family. It depends on Mg(2+) as a cofactor.

The catalysed reaction is (2E,6E)-farnesyl diphosphate = (1S,8aR)-delta-cadinene + diphosphate. It functions in the pathway secondary metabolite biosynthesis; terpenoid biosynthesis. Functionally, responsible for the cyclization of trans,trans-farnesyl diphosphate (FPP) to (+)-delta cadinene. This is (+)-delta-cadinene synthase isozyme A (CAD1-A) from Gossypium arboreum (Tree cotton).